We begin with the raw amino-acid sequence, 31 residues long: VLLLSQDYGKYKEVAELTRTQILAASYELHK.

Spectrin repeat units follow at residues 1 to 10 (VLLLSQDYGK), 11 to 19 (YKEVAELTR), and 20 to 31 (TQILAASYELHK). Tyr-27 carries the phosphotyrosine modification.

Belongs to the spectrin family. In terms of assembly, interacts with ANK2. Interacts with CPNE4 (via VWFA domain). Like erythrocyte spectrin, the spectrin-like proteins are capable to form dimers which can further associate to tetramers. Associates with the gamma-tubulin complex in brain, but not in kidney, liver, sperm, or uterus. Interacts with CAMSAP1. Can form heterodimers with SPTAN1.

The protein localises to the cytoplasm. Its subcellular location is the cytoskeleton. It is found in the myofibril. It localises to the sarcomere. The protein resides in the m line. The protein localises to the cytosol. Its subcellular location is the cell membrane. In terms of biological role, fodrin, which seems to be involved in secretion, interacts with calmodulin in a calcium-dependent manner and is thus candidate for the calcium-dependent movement of the cytoskeleton at the membrane. Plays a critical role in central nervous system development and function. This chain is Spectrin beta chain, non-erythrocytic 1 (SPTBN1), found in Capra hircus (Goat).